Reading from the N-terminus, the 187-residue chain is UPF0340 protein str1894 (187 aa).

The protein belongs to the UPF0340 family.

The protein is UPF0340 protein str1894 of Streptococcus thermophilus (strain CNRZ 1066).